The sequence spans 71 residues: Small ribosomal subunit protein bS21 (71 aa).

The tract at residues 37–71 (HYEKPTQERKRKAAAAVKRHMKRLSREQARRRRLY) is disordered. Basic residues predominate over residues 45-71 (RKRKAAAAVKRHMKRLSREQARRRRLY).

This sequence belongs to the bacterial ribosomal protein bS21 family.

The sequence is that of Small ribosomal subunit protein bS21 from Alkalilimnicola ehrlichii (strain ATCC BAA-1101 / DSM 17681 / MLHE-1).